The chain runs to 222 residues: Hexitol phosphatase B (222 aa).

The active-site Nucleophile is aspartate 13. Aspartate 13 and aspartate 15 together coordinate a divalent metal cation. Residues 13–15 (DMD), 115–116 (SA), and lysine 148 contribute to the substrate site. Residue aspartate 15 is the Proton donor of the active site. Aspartate 173 contacts a divalent metal cation.

It belongs to the HAD-like hydrolase superfamily. CbbY/CbbZ/Gph/YieH family. It depends on Mg(2+) as a cofactor. The cofactor is Mn(2+). Co(2+) serves as cofactor. Zn(2+) is required as a cofactor.

It carries out the reaction sugar phosphate + H2O = sugar + phosphate.. The enzyme catalyses 2-deoxy-D-glucose 6-phosphate + H2O = 2-deoxy-D-glucose + phosphate. The catalysed reaction is D-mannitol 1-phosphate + H2O = D-mannitol + phosphate. It catalyses the reaction D-sorbitol 6-phosphate + H2O = D-sorbitol + phosphate. Its function is as follows. Sugar-phosphate phosphohydrolase that catalyzes the dephosphorylation of D-mannitol 1-phosphate and D-sorbitol 6-phosphate. Also catalyzes the dephosphorylation of 2-deoxyglucose 6-phosphate (2dGlu6P); this is a biologically important activity in vivo since it contributes to the elimination of this toxic compound and plays an important role in the resistance of E.coli to 2-deoxyglucose. In Escherichia coli O157:H7, this protein is Hexitol phosphatase B.